Consider the following 250-residue polypeptide: U6 snRNA phosphodiesterase 1 (250 aa).

Positions 1 to 31 are disordered; the sequence is MALVSYSSSEEDEGETSEPPGRRLPPLPPPT. The segment covering 22–31 has biased composition (pro residues); the sequence is RRLPPLPPPT. Histidine 105 serves as the catalytic Proton acceptor. AMP is bound at residue 105–107; sequence HIS. UMP-binding positions include glutamine 149, tyrosine 187, and 191–195; that span reads SFHVS. AMP-binding positions include tyrosine 187 and 189–195; that span reads EPSFHVS. The Proton donor role is filled by histidine 193.

Belongs to the 2H phosphoesterase superfamily. USB1 family.

The protein localises to the nucleus. The enzyme catalyses a 3'-end uridylyl-uridine-RNA = a 3'-end 2',3'-cyclophospho-uridine-RNA + uridine. It carries out the reaction a 3'-end uridylyl-adenosine-RNA = a 3'-end 2',3'-cyclophospho-uridine-RNA + adenosine. Its function is as follows. 3'-5' RNA exonuclease that trims the 3' end of oligo(U) and oligo(A) tracts of the pre-U6 small nuclear RNA (snRNA) molecule, leading to the formation of a mature U6 snRNA 3' end-terminated with a 2',3'-cyclic phosphate. Participates in the U6 snRNA 3' end processing that prevents U6 snRNA degradation. In addition also removes uridines from the 3' end of U6atac snRNA and possibly the vault RNA VTRNA1-1. In Xenopus laevis (African clawed frog), this protein is U6 snRNA phosphodiesterase 1.